Reading from the N-terminus, the 609-residue chain is tRNA 5-methylaminomethyl-2-thiouridine biosynthesis bifunctional protein MnmC (609 aa).

The interval 1 to 229 (MVELAAATCL…TRNTLPARAM (229 aa)) is tRNA (mnm(5)s(2)U34)-methyltransferase. Positions 237–609 (IGAGLAGASV…SPELPVSCAP (373 aa)) are FAD-dependent cmnm(5)s(2)U34 oxidoreductase.

In the N-terminal section; belongs to the methyltransferase superfamily. tRNA (mnm(5)s(2)U34)-methyltransferase family. It in the C-terminal section; belongs to the DAO family. It depends on FAD as a cofactor.

The protein resides in the cytoplasm. It carries out the reaction 5-aminomethyl-2-thiouridine(34) in tRNA + S-adenosyl-L-methionine = 5-methylaminomethyl-2-thiouridine(34) in tRNA + S-adenosyl-L-homocysteine + H(+). Its function is as follows. Catalyzes the last two steps in the biosynthesis of 5-methylaminomethyl-2-thiouridine (mnm(5)s(2)U) at the wobble position (U34) in tRNA. Catalyzes the FAD-dependent demodification of cmnm(5)s(2)U34 to nm(5)s(2)U34, followed by the transfer of a methyl group from S-adenosyl-L-methionine to nm(5)s(2)U34, to form mnm(5)s(2)U34. The sequence is that of tRNA 5-methylaminomethyl-2-thiouridine biosynthesis bifunctional protein MnmC (mnmC) from Albidiferax ferrireducens (strain ATCC BAA-621 / DSM 15236 / T118) (Rhodoferax ferrireducens).